We begin with the raw amino-acid sequence, 20 residues long: Large ribosomal subunit protein uL5 (20 aa).

The protein belongs to the universal ribosomal protein uL5 family. Part of the 50S ribosomal subunit; part of the 5S rRNA/L5/L18/L25 subcomplex. Contacts the 5S rRNA and the P site tRNA. Forms a bridge to the 30S subunit in the 70S ribosome.

Its function is as follows. This is one of the proteins that bind and probably mediate the attachment of the 5S RNA into the large ribosomal subunit, where it forms part of the central protuberance. In the 70S ribosome it contacts protein S13 of the 30S subunit (bridge B1b), connecting the two subunits; this bridge is implicated in subunit movement. Contacts the P site tRNA; the 5S rRNA and some of its associated proteins might help stabilize positioning of ribosome-bound tRNAs. The protein is Large ribosomal subunit protein uL5 (rplE) of Bacillus cereus.